Here is a 148-residue protein sequence, read N- to C-terminus: Large ribosomal subunit protein bL27m (148 aa).

The transit peptide at 1 to 30 (MALAVLAWRTRTAVIALLSPPQAAALAVRY) directs the protein to the mitochondrion.

It belongs to the bacterial ribosomal protein bL27 family. Component of the mitochondrial ribosome large subunit (39S) which comprises a 16S rRNA and about 50 distinct proteins.

It is found in the mitochondrion. This is Large ribosomal subunit protein bL27m (MRPL27) from Bos taurus (Bovine).